The chain runs to 621 residues: 1-deoxy-D-xylulose-5-phosphate synthase (621 aa).

Residues H80 and 121–123 contribute to the thiamine diphosphate site; that span reads GHS. D152 provides a ligand contact to Mg(2+). Thiamine diphosphate contacts are provided by residues 153-154, N181, Y288, and E371; that span reads GA. Residue N181 participates in Mg(2+) binding.

This sequence belongs to the transketolase family. DXPS subfamily. As to quaternary structure, homodimer. Requires Mg(2+) as cofactor. Thiamine diphosphate is required as a cofactor.

The catalysed reaction is D-glyceraldehyde 3-phosphate + pyruvate + H(+) = 1-deoxy-D-xylulose 5-phosphate + CO2. It functions in the pathway metabolic intermediate biosynthesis; 1-deoxy-D-xylulose 5-phosphate biosynthesis; 1-deoxy-D-xylulose 5-phosphate from D-glyceraldehyde 3-phosphate and pyruvate: step 1/1. Functionally, catalyzes the acyloin condensation reaction between C atoms 2 and 3 of pyruvate and glyceraldehyde 3-phosphate to yield 1-deoxy-D-xylulose-5-phosphate (DXP). The sequence is that of 1-deoxy-D-xylulose-5-phosphate synthase from Pectobacterium atrosepticum (strain SCRI 1043 / ATCC BAA-672) (Erwinia carotovora subsp. atroseptica).